Here is a 414-residue protein sequence, read N- to C-terminus: 11-beta-hydroxysteroid dehydrogenase type 2 (414 aa).

The next 4 membrane-spanning stretches (helical) occupy residues 3–23 (DFAV…GGAV), 26–46 (FLAF…ATLL), 52–72 (ALCM…WLYF), and 341–361 (YYAG…PLSI). The disordered stretch occupies residues 382–414 (KQQGLSPNDNNNSIKENMNDSSSNNSNFTKCID). The segment covering 384–397 (QGLSPNDNNNSIKE) has biased composition (polar residues).

This sequence belongs to the short-chain dehydrogenases/reductases (SDR) family. Broadly expressed in peripheral (brain, gill, eye, heart, liver, head kidney, posterior kidney, and gut).

Its subcellular location is the membrane. The catalysed reaction is an 11beta-hydroxysteroid + NAD(+) = an 11-oxosteroid + NADH + H(+). It catalyses the reaction cortisol + NAD(+) = cortisone + NADH + H(+). The enzyme catalyses corticosterone + NAD(+) = 11-dehydrocorticosterone + NADH + H(+). It carries out the reaction 11beta,17beta-dihydroxyandrost-4-ene-3-one + NAD(+) = 17beta-hydroxyandrost-4-ene-3,11-dione + NADH + H(+). The catalysed reaction is 11beta-hydroxyandrost-4-ene-3,17-dione + NAD(+) = androst-4-ene-3,11,17-trione + NADH + H(+). It participates in steroid metabolism. In terms of biological role, catalyzes the conversion of biologically active 11beta-hydroxyglucocorticoids (11beta-hydroxysteroid) such as cortisol, to inactive 11-ketoglucocorticoids (11-oxosteroid) such as cortisone, in the presence of NAD(+). Cortisol is the primary glucocorticoid in teleosts and is released to increase glucose bioavailability in order to meet the increased energy demands in response to stress. Functions as a dehydrogenase (oxidase), thereby decreasing the concentration of active glucocorticoids, regulating the hypothalamus-pituitary-interrenal (HPI) axis function in adult fish. Decreasing the excess glucocorticoids may be of relevance to brain function and neural proliferation. Plays a key role by catalyzing the oxidation of 11beta-hydroxytestosterone (11beta,17beta-dihydroxyandrost-4-ene-3-one) to 11-ketotestosterone (17beta-hydroxyandrost-4-ene-3,11-dione), the major fish androgen, that activates androgen receptor transcriptional activity. Catalyzes the conversion of 11beta-hydroxyandrostenedione (11beta-hydroxyandrost-4-ene-3,17-dione) to 11-ketoandrostenedione (androst-4-ene-3,11,17-trione), which can be further metabolized to 11-ketotestosterone. Exerts a dual role in fish by inactivating glucocorticoids and activating androgens. The polypeptide is 11-beta-hydroxysteroid dehydrogenase type 2 (hsd11b2) (Danio rerio (Zebrafish)).